Here is a 380-residue protein sequence, read N- to C-terminus: D-threo-3-hydroxyaspartate dehydratase (380 aa).

Lys43 is subject to N6-(pyridoxal phosphate)lysine.

It belongs to the DSD1 family. Monomer. Requires pyridoxal 5'-phosphate as cofactor. The cofactor is Mn(2+). Co(2+) serves as cofactor. It depends on Ni(2+) as a cofactor.

It catalyses the reaction (3R)-3-hydroxy-D-aspartate = oxaloacetate + NH4(+). Its activity is regulated as follows. Strongly inhibited by hydroxylamine. Modestly inhibited by EDTA. Its function is as follows. Catalyzes the deamination of D-threo-3-hydroxyaspartate (D-THA). Also exhibits dehydratase activity towards L-threo-3-hydroxyaspartate (L-THA), L-erythro-3-hydroxyaspartate (L-EHA) and D-serine. This Delftia sp. (strain HT23) protein is D-threo-3-hydroxyaspartate dehydratase (dthadh).